Consider the following 340-residue polypeptide: UDP-glucose 4-epimerase (340 aa).

NAD(+) is bound by residues 12–13 (FI), 32–37 (DNYGNS), 59–60 (DV), 81–85 (FAGLK), asparagine 100, serine 125, tyrosine 150, lysine 154, and phenylalanine 179. Residues serine 125 and tyrosine 150 each contribute to the substrate site. The Proton acceptor role is filled by tyrosine 150. Residues asparagine 180, 200 to 201 (NL), 217 to 219 (QVY), arginine 232, and 292 to 295 (RPGD) contribute to the substrate site.

This sequence belongs to the NAD(P)-dependent epimerase/dehydratase family. As to quaternary structure, homodimer. The cofactor is NAD(+).

The enzyme catalyses UDP-alpha-D-glucose = UDP-alpha-D-galactose. The protein operates within carbohydrate metabolism; galactose metabolism. Functionally, involved in the metabolism of galactose. Catalyzes the conversion of UDP-galactose (UDP-Gal) to UDP-glucose (UDP-Glc) through a mechanism involving the transient reduction of NAD. Can also epimerize UDP-GalNAc to UDP-GlcNAc. Involved in the lacto-N-biose I/galacto-N-biose (LNB/GNB) degradation pathway, which is important for host intestinal colonization by bifidobacteria. This is UDP-glucose 4-epimerase (lnpD) from Bifidobacterium longum subsp. longum (strain ATCC 15707 / DSM 20219 / JCM 1217 / NCTC 11818 / E194b).